The sequence spans 55 residues: Large ribosomal subunit protein bL33 (55 aa).

This sequence belongs to the bacterial ribosomal protein bL33 family.

In Cereibacter sphaeroides (strain ATCC 17029 / ATH 2.4.9) (Rhodobacter sphaeroides), this protein is Large ribosomal subunit protein bL33.